A 266-amino-acid chain; its full sequence is Eukaryotic translation initiation factor 3 subunit J (266 aa).

2 disordered regions span residues 1–111 (MAPS…EKDA) and 217–266 (NEKM…DDFM). A compositionally biased stretch (acidic residues) spans 26 to 44 (DEEEEDVLDSWDAAEDSEV). A coiled-coil region spans residues 40 to 82 (EDSEVEREKAAKAAEAKAKAEAEAAANKKSKAQRIQEKKAQRK). Basic and acidic residues-rich tracts occupy residues 45–61 (EREKAAKAAEAKAKAEA) and 73–85 (RIQEKKAQRKADA). Residues 86–97 (DAEDSDDSDEDE) show a composition bias toward acidic residues. Composition is skewed to basic and acidic residues over residues 98-111 (AERRARLRKTEKDA) and 218-230 (EKMKEERAADKGN). The span at 254–266 (SYDDDGLDDDDFM) shows a compositional bias: acidic residues.

Belongs to the eIF-3 subunit J family. As to quaternary structure, component of the eukaryotic translation initiation factor 3 (eIF-3) complex.

The protein localises to the cytoplasm. Its function is as follows. Component of the eukaryotic translation initiation factor 3 (eIF-3) complex, which is involved in protein synthesis of a specialized repertoire of mRNAs and, together with other initiation factors, stimulates binding of mRNA and methionyl-tRNAi to the 40S ribosome. The eIF-3 complex specifically targets and initiates translation of a subset of mRNAs involved in cell proliferation. This chain is Eukaryotic translation initiation factor 3 subunit J (hcr1), found in Aspergillus niger (strain ATCC MYA-4892 / CBS 513.88 / FGSC A1513).